We begin with the raw amino-acid sequence, 253 residues long: Claudin domain-containing protein 1 (253 aa).

The chain crosses the membrane as a helical span at residues 5-25; the sequence is FATAFVIACVLSLISTIYMAA. 2 N-linked (GlcNAc...) asparagine glycosylation sites follow: Asn-42 and Asn-72. 3 helical membrane-spanning segments follow: residues 141–161, 175–195, and 216–236; these read FLLPFVSLGLMCFGALIGLCA, ILHLLAGLCTLGSVSCYVAGI, and FCLACVSAPLQFMAAALFIWA.

This sequence belongs to the PMP-22/EMP/MP20 family. As to expression, in the brain, highly expressed in endothelial cells of the cerebellum compared to other regions (at protein level).

It is found in the cell junction. Its subcellular location is the tight junction. The protein resides in the cell membrane. Plays a role in negatively regulating the permeability of cells to small molecules. The polypeptide is Claudin domain-containing protein 1 (Cldnd1) (Mus musculus (Mouse)).